The following is a 183-amino-acid chain: MDIDPYKEFGASVELLSFLPSDFFPSVRDLLDTASALYRDALESPEHCTPNHTALRQAILCWGELMTLASWVGNNLEDPAARDLVVNYVNTNMGLKIRQLLWFHISCLTFGRETVLEYLVSFGVWIRTPPAYRPPNAPILSTLPETTVVRRRGRSPRRRTPSPRRRRSQSPRRRRSQSPASQC.

The interval 136-183 (NAPILSTLPETTVVRRRGRSPRRRTPSPRRRRSQSPRRRRSQSPASQC) is disordered. Residues 149-176 (VRRRGRSPRRRTPSPRRRRSQSPRRRRS) are compositionally biased toward basic residues. Phosphoserine; by host occurs at positions 155, 162, and 170. A 1; half-length repeat occupies 155-161 (SPRRRTP). A 3 X 8 AA repeats of S-P-R-R-R-[PR]-S-Q region spans residues 155–177 (SPRRRTPSPRRRRSQSPRRRRSQ). A Bipartite nuclear localization signal motif is present at residues 158–175 (RRTPSPRRRRSQSPRRRR). Repeat copies occupy residues 162–169 (SPRRRRSQ) and 170–177 (SPRRRRSQ). An RNA binding region spans residues 177-183 (QSPASQC).

The protein belongs to the orthohepadnavirus core antigen family. As to quaternary structure, homodimerizes, then multimerizes. Interacts with cytosol exposed regions of viral L glycoprotein present in the reticulum-to-Golgi compartment. Interacts with human FLNB. Phosphorylated form interacts with host importin alpha; this interaction depends on the exposure of the NLS, which itself depends upon genome maturation and/or phosphorylation of the capsid protein. Interacts with host NUP153. Phosphorylated by host SRPK1, SRPK2, and maybe protein kinase C or GAPDH. Phosphorylation is critical for pregenomic RNA packaging. Protein kinase C phosphorylation is stimulated by HBx protein and may play a role in transport of the viral genome to the nucleus at the late step during the viral replication cycle.

The protein localises to the virion. Its subcellular location is the host cytoplasm. In terms of biological role, self assembles to form an icosahedral capsid. Most capsids appear to be large particles with an icosahedral symmetry of T=4 and consist of 240 copies of capsid protein, though a fraction forms smaller T=3 particles consisting of 180 capsid proteins. Entering capsids are transported along microtubules to the nucleus. Phosphorylation of the capsid is thought to induce exposure of nuclear localization signal in the C-terminal portion of the capsid protein that allows binding to the nuclear pore complex via the importin (karyopherin-) alpha and beta. Capsids are imported in intact form through the nuclear pore into the nuclear basket, where it probably binds NUP153. Only capsids that contain the mature viral genome can release the viral DNA and capsid protein into the nucleoplasm. Immature capsids get stuck in the basket. Capsids encapsulate the pre-genomic RNA and the P protein. Pre-genomic RNA is reverse-transcribed into DNA while the capsid is still in the cytoplasm. The capsid can then either be directed to the nucleus, providing more genomes for transcription, or bud through the endoplasmic reticulum to provide new virions. This is Capsid protein from Hepatitis B virus genotype F2 (isolate Brazil/w4B) (HBV-F).